Consider the following 272-residue polypeptide: HMP-PP phosphatase (272 aa).

Asp8 functions as the Nucleophile in the catalytic mechanism. Positions 8, 10, and 212 each coordinate Mg(2+).

Belongs to the HAD-like hydrolase superfamily. Cof family. Mg(2+) serves as cofactor.

It catalyses the reaction 4-amino-2-methyl-5-(diphosphooxymethyl)pyrimidine + H2O = 4-amino-2-methyl-5-(phosphooxymethyl)pyrimidine + phosphate + H(+). Catalyzes the hydrolysis of 4-amino-2-methyl-5-hydroxymethylpyrimidine pyrophosphate (HMP-PP) to 4-amino-2-methyl-5-hydroxymethylpyrimidine phosphate (HMP-P). This chain is HMP-PP phosphatase, found in Shigella flexneri serotype 5b (strain 8401).